A 341-amino-acid polypeptide reads, in one-letter code: Muscleblind-like protein 1 (341 aa).

T6 carries the phosphothreonine modification. C3H1-type zinc fingers lie at residues 13–41 (WLTLEVCREFQRGTCSRPDTECKFAHPSK), 47–73 (NGRVIACFDSLKGRCSRENCKYLHPPP), 178–206 (TDRLEVCREYQRGNCNRGENDCRFAHPAD), and 214–240 (DNTVTVCMDYIKGRCSREKCKYFHPPA).

This sequence belongs to the muscleblind family. As to quaternary structure, interacts with DDX1 and YBX1. Interacts with HNRNPH1; the interaction in RNA-independent. Interacts with RBPMS; the interaction allows cooperative assembly of RNA-bound stable cell-specific alternative splicing regulatory complexes. Highly expressed in cardiac and skeletal muscle. Weakly expressed in heart and eye (at protein level).

The protein localises to the nucleus. The protein resides in the cytoplasm. It is found in the cytoplasmic granule. Its function is as follows. Mediates pre-mRNA alternative splicing regulation. Acts either as activator or repressor of splicing on specific pre-mRNA targets. Inhibits cardiac troponin-T (TNNT2) pre-mRNA exon inclusion but induces insulin receptor (IR) pre-mRNA exon inclusion in muscle. Antagonizes the alternative splicing activity pattern of CELF proteins. Regulates the TNNT2 exon 5 skipping through competition with U2AF2. Inhibits the formation of the spliceosome A complex on intron 4 of TNNT2 pre-mRNA. Binds to the stem-loop structure within the polypyrimidine tract of TNNT2 intron 4 during spliceosome assembly. Binds to the 5'-YGCU(U/G)Y-3'consensus sequence. Binds to the IR RNA. Binds to CUG triplet repeat expansion in myotonic dystrophy muscle cells by sequestering the target RNAs. Together with RNA binding proteins RBPMS and RBFOX2, activates vascular smooth muscle cells alternative splicing events. Regulates NCOR2 alternative splicing. This is Muscleblind-like protein 1 (Mbnl1) from Mus musculus (Mouse).